The chain runs to 205 residues: Histone H1, early embryonic (205 aa).

Disordered regions lie at residues 1–21 (MAEK…HPPA) and 94–205 (AKAQ…AKSK). Residues 17 to 91 (AHPPAAEMVA…GASGSFKVNV (75 aa)) form the H15 domain. Basic and acidic residues predominate over residues 98–124 (ASEKAKKEKEKAKLLAQREKAKEKGCS). 2 stretches are compositionally biased toward basic residues: residues 135–150 (PKKV…KPVK) and 157–205 (EKKK…AKSK).

Belongs to the histone H1/H5 family.

It is found in the nucleus. It localises to the chromosome. Functionally, histones H1 are necessary for the condensation of nucleosome chains into higher-order structures. The polypeptide is Histone H1, early embryonic (Strongylocentrotus purpuratus (Purple sea urchin)).